The chain runs to 259 residues: Ferritin-2, chloroplastic (259 aa).

Residues Met-1–Ser-52 constitute a chloroplast transit peptide. The segment at Asn-53 to Arg-85 is extension peptide (EP). The Ferritin-like diiron domain occupies His-86–Gly-239. Fe cation contacts are provided by Glu-103, Glu-138, His-141, and Gln-221.

This sequence belongs to the ferritin family. Oligomer of 24 subunits. There are two types of subunits: L (light) chain and H (heavy) chain. The major chain can be light or heavy, depending on the species and tissue type. The functional molecule forms a roughly spherical shell with a diameter of 12 nm and contains a central cavity into which the insoluble mineral iron core is deposited.

Its subcellular location is the plastid. The protein localises to the chloroplast. It catalyses the reaction 4 Fe(2+) + O2 + 4 H(+) = 4 Fe(3+) + 2 H2O. Stores iron in a soluble, non-toxic, readily available form. Important for iron homeostasis. Has ferroxidase activity. Iron is taken up in the ferrous form and deposited as ferric hydroxides after oxidation. The protein is Ferritin-2, chloroplastic (FER2) of Nicotiana tabacum (Common tobacco).